The chain runs to 574 residues: MQARKYLFSTLKETPHNSDCISHALMLRAGIIRQNTSGTYIWLPTGLRILKKVIRIIKNEMKQCGAMEIAMPFLQKKNLWDLSKRVITYGQELFQVTDRTNKKFILGPTHEEMITYFIKNELQSYKQLPLILYQIQTKFRDEIRPRFGIIRTKEFMMKDAYSFHINMLSLEKTYNLMYQTYIKIFKKMKLKFYAVEADSGLMGGLKSHEFQAPSNTGEDVIVLSTQSNYLANIQVATSIQNNHIKYSTNNYFKKIKILRNNNDIYKKLSNTPNFKKSNTIKTILVKTKNFSKHLFVAILIREDHTINEYKLSKINEIEYPLIFASKQEILNVTGTTKDFIGPINLDFPVIADFSVINLENFTIGSNITNKYFNNMNWNKDISIPQTYDIRYVLEGDPSPDGAGELKMQKSIEIAHIFQLGKKYSKIMNVKIQNKIGKKDTLIMGCYGIGITRIIAAIIEQNNDKNGIIWPDSIAPFTIAIIPVCFHKSTLVKQQSEKIYNFCKKNNIDALLDDRKQNLSITLSEIELIGIPYSIIISEKLLKNDMVEYRERHKNVKKIINKNHVFKIILNNSLK.

The protein belongs to the class-II aminoacyl-tRNA synthetase family. ProS type 1 subfamily. In terms of assembly, homodimer.

It localises to the cytoplasm. The catalysed reaction is tRNA(Pro) + L-proline + ATP = L-prolyl-tRNA(Pro) + AMP + diphosphate. Catalyzes the attachment of proline to tRNA(Pro) in a two-step reaction: proline is first activated by ATP to form Pro-AMP and then transferred to the acceptor end of tRNA(Pro). As ProRS can inadvertently accommodate and process non-cognate amino acids such as alanine and cysteine, to avoid such errors it has two additional distinct editing activities against alanine. One activity is designated as 'pretransfer' editing and involves the tRNA(Pro)-independent hydrolysis of activated Ala-AMP. The other activity is designated 'posttransfer' editing and involves deacylation of mischarged Ala-tRNA(Pro). The misacylated Cys-tRNA(Pro) is not edited by ProRS. The protein is Proline--tRNA ligase of Buchnera aphidicola subsp. Baizongia pistaciae (strain Bp).